The chain runs to 215 residues: Protein transport protein sec22 (215 aa).

Topologically, residues 1-194 (MVKSTTVTRL…RVNLEALWRQ (194 aa)) are cytoplasmic. Positions 9-118 (RLDGLPLAAS…YAFVQFDTFM (110 aa)) constitute a Longin domain. Residues 133-193 (NLDKLNTELK…RRVNLEALWR (61 aa)) form the v-SNARE coiled-coil homology domain. A helical; Anchor for type IV membrane protein transmembrane segment spans residues 195-215 (YGPVSIIALLFLIFVYWRFFA).

This sequence belongs to the synaptobrevin family. In terms of assembly, component of two distinct SNARE complexes consisting of sed5, bos1, bet1 and sec22 or ufe1, use1, sec20 and sec22. Ykt6 can probably replace sec22 as subunit of either complex.

The protein resides in the membrane. Its subcellular location is the endoplasmic reticulum membrane. It localises to the golgi apparatus membrane. Functionally, nonessential SNARE involved in targeting and fusion of ER-derived transport vesicles with the Golgi complex as well as Golgi-derived retrograde transport vesicles with the ER. This Schizosaccharomyces pombe (strain 972 / ATCC 24843) (Fission yeast) protein is Protein transport protein sec22 (sec22).